The chain runs to 85 residues: ATP synthase subunit c (85 aa).

A run of 2 helical transmembrane segments spans residues 1–21 (MLAW…ALVG) and 53–73 (LLFA…VALI).

This sequence belongs to the ATPase C chain family. F-type ATPases have 2 components, F(1) - the catalytic core - and F(0) - the membrane proton channel. F(1) has five subunits: alpha(3), beta(3), gamma(1), delta(1), epsilon(1). F(0) has three main subunits: a(1), b(2) and c(10-14). The alpha and beta chains form an alternating ring which encloses part of the gamma chain. F(1) is attached to F(0) by a central stalk formed by the gamma and epsilon chains, while a peripheral stalk is formed by the delta and b chains.

The protein localises to the cell inner membrane. Its function is as follows. F(1)F(0) ATP synthase produces ATP from ADP in the presence of a proton or sodium gradient. F-type ATPases consist of two structural domains, F(1) containing the extramembraneous catalytic core and F(0) containing the membrane proton channel, linked together by a central stalk and a peripheral stalk. During catalysis, ATP synthesis in the catalytic domain of F(1) is coupled via a rotary mechanism of the central stalk subunits to proton translocation. In terms of biological role, key component of the F(0) channel; it plays a direct role in translocation across the membrane. A homomeric c-ring of between 10-14 subunits forms the central stalk rotor element with the F(1) delta and epsilon subunits. The sequence is that of ATP synthase subunit c from Dictyoglomus turgidum (strain DSM 6724 / Z-1310).